A 129-amino-acid chain; its full sequence is Follitropin subunit beta (129 aa).

The signal sequence occupies residues 1–18 (MKSVQFCFLFCCWRATCC). 6 cysteine pairs are disulfide-bonded: Cys-21-Cys-69, Cys-35-Cys-84, Cys-38-Cys-122, Cys-46-Cys-100, Cys-50-Cys-102, and Cys-105-Cys-112. Residues Asn-25 and Asn-42 are each glycosylated (N-linked (GlcNAc...) asparagine).

Belongs to the glycoprotein hormones subunit beta family. As to quaternary structure, heterodimer. The active follitropin is a heterodimer composed of an alpha chain/CGA shared with other hormones and a unique beta chain/FSHB shown here.

It localises to the secreted. Together with the alpha chain CGA constitutes follitropin, the follicle-stimulating hormone, and provides its biological specificity to the hormone heterodimer. Binds FSHR, a G protein-coupled receptor, on target cells to activate downstream signaling pathways. Follitropin is involved in follicle development and spermatogenesis in reproductive organs. This chain is Follitropin subunit beta (FSHB), found in Cervus nippon (Sika deer).